We begin with the raw amino-acid sequence, 827 residues long: Thymine dioxygenase JBP1 (827 aa).

Positions 62 to 264 are thymine dioxygenase; that stretch reads QIIGVVLREA…RLTCVFYYRA (203 aa). Residues His-189, Asp-191, and His-239 each contribute to the Fe cation site. Arg-255 is a 2-oxoglutarate binding site. Disordered stretches follow at residues 364-383 and 539-568; these read PLRG…PRPL and PEEK…HEKR. The interval 392–561 is DNA-binding JBP1 domain; it reads TNLMVSTAVE…IEEARRHGMP (170 aa). The segment covering 539–557 has biased composition (basic and acidic residues); the sequence is PEEKKRRMERKQRIEEARR.

Belongs to the TET family. JBP1 subfamily. As to quaternary structure, monomer. Binds to DNA as a monomer. The cofactor is Fe(2+).

The protein resides in the nucleus. The catalysed reaction is thymine + 2-oxoglutarate + O2 = 5-hydroxymethyluracil + succinate + CO2. Functionally, dioxygenase that catalyzes the first step of DNA base J (beta-d-glucosyl-HOMedU) biosynthesis by converting thymine to 5-hydroxymethyluracil (HOMedU). DNA base J is a hypermodified thymidine residue found in the genome of kinetoplastid parasites, which is localized primarily to repetitive DNA, namely the telomeres, and is implicated in the regulation of antigenic variation. Also specifically binds to base J-containing DNA (J-DNA). Involved in propagation and maintenance of DNA base J synthesis initiated by JBP2 by specifically binding already synthesized DNA base J and propagating J synthesis. Thymine dioxygenase activity and J-DNA-binding are independent functions. This is Thymine dioxygenase JBP1 (JBP1) from Leishmania tarentolae (Sauroleishmania tarentolae).